A 262-amino-acid chain; its full sequence is MVKVAYVQMNPQILEPDKNYSKAEKLIKEASKQGAQLVVLPELFDTGYNFETREEVFEIAQKIPEGETTTFLMDVARDTGVYIVAGTAEKDGDVLYNSAVVVGPRGFIGKYRKIHLFYREKFFFEPGDLGFRVFDLGFMKVGVMICFDWFFPESARTLALKGADVIAHPANLVMPYAPRAMPIRALENKVYTVTADRVGEERGLKFIGKSLIASPKAEVLSMASETEEEVGVAEIDLYLVRNKRINDLNDIFKDRREEYYFR.

The CN hydrolase domain occupies 2–237; sequence VKVAYVQMNP…EEVGVAEIDL (236 aa). Glutamate 42 acts as the Proton acceptor in catalysis. The active-site Proton donor is lysine 113. Catalysis depends on cysteine 146, which acts as the Nucleophile. Residue 173–174 coordinates substrate; the sequence is VM.

The protein belongs to the carbon-nitrogen hydrolase superfamily. In terms of assembly, homodimer.

The catalysed reaction is a nitrile + 2 H2O = a carboxylate + NH4(+). Its activity is regulated as follows. Enzymatic activity is inhibited in the presence of acetone, methanol and metal ions such as Ag(2+) and Hg(2+). Is also inhibited by various thiol reagents such as DTNB, p-chloromercuribenzoate, p-hydroxymercuribenzoate, iodacetamide and iodacetate. EDTA has no influence on activity. Functionally, nitrilase that hydrolyzes preferentially aliphatic nitriles like malononitrile and fumaronitrile in vitro. These dinitriles are converted to the corresponding monoacid mononitriles, showing the enzyme is regioselective. Cannot hydrolyze compounds with a nitrile group bound to an aromatic ring or amino acid. Its biological role is unknown. The polypeptide is Nitrilase (Pyrococcus abyssi (strain GE5 / Orsay)).